The sequence spans 505 residues: Trans-cinnamate 4-monooxygenase (505 aa).

A helical transmembrane segment spans residues 3-23 (LLLLEKTLLGSFVAILVAILV). Residues 213 to 218 (RSRLAQ) and Ala306 each bind (E)-cinnamate. Heme is bound at residue Cys447.

The protein belongs to the cytochrome P450 family. Heme serves as cofactor.

It is found in the membrane. It carries out the reaction (E)-cinnamate + reduced [NADPH--hemoprotein reductase] + O2 = (E)-4-coumarate + oxidized [NADPH--hemoprotein reductase] + H2O + H(+). It functions in the pathway phenylpropanoid metabolism; trans-4-coumarate biosynthesis; trans-4-coumarate from trans-cinnamate: step 1/1. Its function is as follows. Catalyzes the first oxidative step of the phenylpropanoid pathway in higher plants by transforming trans-cinnamate into p-coumarate. The compounds formed by this pathway are essential components for lignification, pollination, and defense against ultraviolet light, predators and pathogens. The chain is Trans-cinnamate 4-monooxygenase (CYP73A13) from Populus tremuloides (Quaking aspen).